The following is a 190-amino-acid chain: ADP-ribosylation factor F (190 aa).

GTP-binding positions include 34 to 40 (DGAGKST), 75 to 79 (DIGGQ), and 136 to 139 (NKQD).

Belongs to the small GTPase superfamily. Arf family.

The protein localises to the golgi apparatus. In terms of biological role, GTP-binding protein that may be involved in protein trafficking. May modulate vesicle budding and uncoating within the Golgi apparatus. In Dictyostelium discoideum (Social amoeba), this protein is ADP-ribosylation factor F (arrF).